The chain runs to 312 residues: Urease accessory protein UreD (312 aa).

The segment at 1-50 is disordered; the sequence is MRPLAPDARCAPSRPGRGPWYARRPVTTPSDPPAALREPPPPARRAGKAG.

Belongs to the UreD family. UreD, UreF and UreG form a complex that acts as a GTP-hydrolysis-dependent molecular chaperone, activating the urease apoprotein by helping to assemble the nickel containing metallocenter of UreC. The UreE protein probably delivers the nickel.

It is found in the cytoplasm. Its function is as follows. Required for maturation of urease via the functional incorporation of the urease nickel metallocenter. This Sorangium cellulosum (strain So ce56) (Polyangium cellulosum (strain So ce56)) protein is Urease accessory protein UreD.